A 286-amino-acid polypeptide reads, in one-letter code: Undecaprenyl-diphosphatase (286 aa).

Helical transmembrane passes span 5–25, 55–75, 92–112, 122–142, 185–205, 229–249, and 264–284; these read WFII…FLPV, IDAF…VLYW, SGFK…VLGL, LFNP…MIFA, IIGA…SFFL, MHIV…LIVV, and FAMY…FNVI.

Belongs to the UppP family.

The protein localises to the cell membrane. It catalyses the reaction di-trans,octa-cis-undecaprenyl diphosphate + H2O = di-trans,octa-cis-undecaprenyl phosphate + phosphate + H(+). Catalyzes the dephosphorylation of undecaprenyl diphosphate (UPP). Confers resistance to bacitracin. This is Undecaprenyl-diphosphatase from Clostridium novyi (strain NT).